We begin with the raw amino-acid sequence, 535 residues long: T-box transcription factor TBX21 (535 aa).

The segment at 1 to 62 (MGIVEPGCGD…SLGSPYPGGA (62 aa)) is disordered. At S53 the chain carries Phosphoserine. Y77 is modified (phosphotyrosine). The segment at 83–109 (AAGFPGAGESFPPPADAEGYQPGEGYA) is disordered. Y118 carries the post-translational modification Phosphotyrosine. A DNA-binding region (T-box) is located at residues 141-326 (LNNHLLWSKF…NNPFAKGFRE (186 aa)). Position 220 is a phosphotyrosine; by ABL1 (Y220). Position 225 is a phosphoserine (S225). Y266 carries the phosphotyrosine; by ABL1 modification. Residue T303 is modified to Phosphothreonine. The residue at position 305 (Y305) is a Phosphotyrosine; by ABL1. A Glycyl lysine isopeptide (Lys-Gly) (interchain with G-Cter in ubiquitin) cross-link involves residue K314. Positions 449–535 (RPMRTLPMEP…EGQFYNYFPN (87 aa)) are disordered. Low complexity predominate over residues 503 to 520 (SPYPSSGDSSSPAGAPSP). A Phosphoserine modification is found at S513. Residue Y530 is modified to Phosphotyrosine; by ITK.

As to quaternary structure, interacts with RUNX1, RUNX3, ITK, ABL1, RELA, CDK9 and KDM6B. The phosphorylated form (at Thr-303) interacts with NFATC2. Interacts with SMARCA4 in a KDM6B-dependent manner. Interacts with CCTN1. Interacts with USP10. The phosphorylated form (at Tyr-530) interacts with GATA3. Post-translationally, phosphorylations at Ser-53, Tyr-77, Ser-225 and Ser-513 are regulated by mTORC1. Phosphorylation at Tyr-530 is essential for its interaction GATA3. Phosphorylation at Tyr-220, Tyr-266 and Tyr-305 enhances its transcriptional activator activity. Phosphorylation at Thr-303 is required for its interaction with NFATC2. In terms of processing, ubiquitinated at Lys-314, leading to its degradation by the proteasome. Ubiquitination is essential for controlling protein stability, binding to the T-box-binding element of the IFN-gamma promoter, and for interaction with NFATC2 through induction of phosphorylation at Thr-303. Deubiquitinated by USP10 leading to its stabilization. T-cell specific.

Its subcellular location is the nucleus. Lineage-defining transcription factor which initiates Th1 lineage development from naive Th precursor cells both by activating Th1 genetic programs and by repressing the opposing Th2 and Th17 genetic programs. Activates transcription of a set of genes important for Th1 cell function, including those encoding IFN-gamma and the chemokine receptor CXCR3. Induces permissive chromatin accessibilty and CpG methylation in IFNG. Activates IFNG and CXCR3 genes in part by recruiting chromatin remodeling complexes including KDM6B, a SMARCA4-containing SWI/SNF-complex, and an H3K4me2-methyltransferase complex to their promoters and all of these complexes serve to establish a more permissive chromatin state conducive with transcriptional activation. Can activate Th1 genes also via recruitment of Mediator complex and P-TEFb (composed of CDK9 and CCNT1/cyclin-T1) in the form of the super elongation complex (SEC) to super-enhancers and associated genes in activated Th1 cells. Inhibits the Th17 cell lineage commitment by blocking RUNX1-mediated transactivation of Th17 cell-specific transcriptinal regulator RORC. Inhibits the Th2 cell lineage commitment by suppressing the production of Th2 cytokines, such as IL-4, IL-5, and IL- 13, via repression of transcriptional regulators GATA3 and NFATC2. Protects Th1 cells from amplifying aberrant type-I IFN response in an IFN-gamma abundant microenvironment by acting as a repressor of type-I IFN transcription factors and type-I IFN-stimulated genes. Acts as a regulator of antiviral B-cell responses; controls chronic viral infection by promoting the antiviral antibody IgG2a isotype switching and via regulation of a broad antiviral gene expression program. Required for the correct development of natural killer (NK) and mucosal-associated invariant T (MAIT) cells. This Homo sapiens (Human) protein is T-box transcription factor TBX21 (TBX21).